The sequence spans 187 residues: UPF0301 protein YqgE (187 aa).

The protein belongs to the UPF0301 (AlgH) family.

This chain is UPF0301 protein YqgE, found in Salmonella paratyphi A (strain ATCC 9150 / SARB42).